Consider the following 299-residue polypeptide: Oxygen-dependent coproporphyrinogen-III oxidase (299 aa).

Residue S92 participates in substrate binding. A divalent metal cation is bound by residues H96 and H106. Residue H106 is the Proton donor of the active site. 108 to 110 (NVR) contacts substrate. H145 and H175 together coordinate a divalent metal cation. An important for dimerization region spans residues 240–275 (YVEFNLVWDRGTLFGLQTGGRTESILMSMPPLVRWE). 258–260 (GGR) is a binding site for substrate.

Belongs to the aerobic coproporphyrinogen-III oxidase family. In terms of assembly, homodimer. It depends on a divalent metal cation as a cofactor.

It is found in the cytoplasm. It carries out the reaction coproporphyrinogen III + O2 + 2 H(+) = protoporphyrinogen IX + 2 CO2 + 2 H2O. It participates in porphyrin-containing compound metabolism; protoporphyrin-IX biosynthesis; protoporphyrinogen-IX from coproporphyrinogen-III (O2 route): step 1/1. Functionally, involved in the heme biosynthesis. Catalyzes the aerobic oxidative decarboxylation of propionate groups of rings A and B of coproporphyrinogen-III to yield the vinyl groups in protoporphyrinogen-IX. This chain is Oxygen-dependent coproporphyrinogen-III oxidase, found in Salmonella typhi.